Reading from the N-terminus, the 336-residue chain is NADH-quinone oxidoreductase subunit H (336 aa).

A run of 8 helical transmembrane segments spans residues 4 to 24, 75 to 95, 108 to 128, 154 to 174, 181 to 201, 233 to 253, 272 to 292, and 308 to 328; these read YILW…LVVA, YLFF…WAVI, LGLL…VIAG, MGFA…TGII, IWHW…IAGI, LFFL…SIMF, FVPG…MFLW, and LGWK…ACMV.

It belongs to the complex I subunit 1 family. NDH-1 is composed of 14 different subunits. Subunits NuoA, H, J, K, L, M, N constitute the membrane sector of the complex.

The protein localises to the cell inner membrane. It carries out the reaction a quinone + NADH + 5 H(+)(in) = a quinol + NAD(+) + 4 H(+)(out). NDH-1 shuttles electrons from NADH, via FMN and iron-sulfur (Fe-S) centers, to quinones in the respiratory chain. The immediate electron acceptor for the enzyme in this species is believed to be ubiquinone. Couples the redox reaction to proton translocation (for every two electrons transferred, four hydrogen ions are translocated across the cytoplasmic membrane), and thus conserves the redox energy in a proton gradient. This subunit may bind ubiquinone. In Francisella tularensis subsp. tularensis (strain FSC 198), this protein is NADH-quinone oxidoreductase subunit H.